A 421-amino-acid chain; its full sequence is Tyrosine--tRNA ligase (421 aa).

Position 42 (Tyr42) interacts with L-tyrosine. The short motif at 47-56 is the 'HIGH' region element; that stretch reads CTAPSLHVGS. Tyr179 and Gln183 together coordinate L-tyrosine. The 'KMSKS' region signature appears at 239–243; that stretch reads KMGKT. An ATP-binding site is contributed by Lys242. One can recognise an S4 RNA-binding domain in the interval 354-419; sequence LGILAAFAKA…RKKHVLLRLA (66 aa).

The protein belongs to the class-I aminoacyl-tRNA synthetase family. TyrS type 1 subfamily. In terms of assembly, homodimer.

It is found in the cytoplasm. The enzyme catalyses tRNA(Tyr) + L-tyrosine + ATP = L-tyrosyl-tRNA(Tyr) + AMP + diphosphate + H(+). Catalyzes the attachment of tyrosine to tRNA(Tyr) in a two-step reaction: tyrosine is first activated by ATP to form Tyr-AMP and then transferred to the acceptor end of tRNA(Tyr). This chain is Tyrosine--tRNA ligase, found in Beijerinckia indica subsp. indica (strain ATCC 9039 / DSM 1715 / NCIMB 8712).